A 497-amino-acid polypeptide reads, in one-letter code: Probable cytosol aminopeptidase (497 aa).

The Mn(2+) site is built by Lys-263 and Asp-268. Lys-275 is a catalytic residue. Asp-286, Asp-345, and Glu-347 together coordinate Mn(2+). Arg-349 is a catalytic residue.

The protein belongs to the peptidase M17 family. The cofactor is Mn(2+).

It is found in the cytoplasm. It catalyses the reaction Release of an N-terminal amino acid, Xaa-|-Yaa-, in which Xaa is preferably Leu, but may be other amino acids including Pro although not Arg or Lys, and Yaa may be Pro. Amino acid amides and methyl esters are also readily hydrolyzed, but rates on arylamides are exceedingly low.. It carries out the reaction Release of an N-terminal amino acid, preferentially leucine, but not glutamic or aspartic acids.. Functionally, presumably involved in the processing and regular turnover of intracellular proteins. Catalyzes the removal of unsubstituted N-terminal amino acids from various peptides. This is Probable cytosol aminopeptidase from Methylorubrum extorquens (strain CM4 / NCIMB 13688) (Methylobacterium extorquens).